An 81-amino-acid polypeptide reads, in one-letter code: Putative defensin-like protein 25 (81 aa).

The signal sequence occupies residues 1–23; it reads MASLKVFSFALILVLTFSVDVEG. 4 disulfides stabilise this stretch: Cys-33-Cys-81, Cys-43-Cys-68, Cys-52-Cys-77, and Cys-56-Cys-79.

This sequence belongs to the DEFL family.

It localises to the secreted. This Arabidopsis thaliana (Mouse-ear cress) protein is Putative defensin-like protein 25.